The following is a 319-amino-acid chain: MYKKFVPFAVFLFLFFVSFEMMENPHALDYIGAMKKDTVTVTASKDPLYEELLQKAPEYEVKPQNARIDKVWKSIPGYNGLKVNIEQSYKKMKQHGKFREKDLVYSQVKPSVHLESLQPEPIYKGNPDKPMVAFLINVAWGNEYLEKMLPILQKHQVKATFFLEGNWVRNNVQLAKKIAKDGHEIGNHSYNHPDMSKLTTGRISEQLDKTNEQIEQTIGVKPKWFAPPSGSFRKAVIDIAAEKQMGTVMWTVDTIDWQKPAPSVLQTRVLSKIHNGAMILMHPTDPTAESLEALITQIKDKGYALGTVTELMDETRLLK.

A signal peptide spans 1 to 27 (MYKKFVPFAVFLFLFFVSFEMMENPHA). The NodB homology domain occupies 130-306 (PMVAFLINVA…QIKDKGYALG (177 aa)).

This sequence belongs to the polysaccharide deacetylase family.

This is an uncharacterized protein from Bacillus subtilis (strain 168).